We begin with the raw amino-acid sequence, 113 residues long: Mediator of RNA polymerase II transcription subunit 11 (113 aa).

This sequence belongs to the Mediator complex subunit 11 family. Component of the Mediator complex.

The protein localises to the nucleus. Component of the Mediator complex, a coactivator involved in the regulated transcription of nearly all RNA polymerase II-dependent genes. Mediator functions as a bridge to convey information from gene-specific regulatory proteins to the basal RNA polymerase II transcription machinery. Mediator is recruited to promoters by direct interactions with regulatory proteins and serves as a scaffold for the assembly of a functional pre-initiation complex with RNA polymerase II and the general transcription factors. The polypeptide is Mediator of RNA polymerase II transcription subunit 11 (MED11) (Eremothecium gossypii (strain ATCC 10895 / CBS 109.51 / FGSC 9923 / NRRL Y-1056) (Yeast)).